We begin with the raw amino-acid sequence, 270 residues long: Phthiotriol/phenolphthiotriol dimycocerosates methyltransferase (270 aa).

This sequence belongs to the methyltransferase superfamily. Phthiotriol/phenolphthiotriol dimycocerosates methyltransferase family.

Catalyzes the methylation of the lipid moiety of the intermediate compounds phthiotriol and glycosylated phenolphthiotriol dimycoserosates to form phthiocerol dimycocerosates (DIM A) and glycosylated phenolphthiocerol dimycocerosates (PGL). The protein is Phthiotriol/phenolphthiotriol dimycocerosates methyltransferase of Mycobacterium bovis (strain ATCC BAA-935 / AF2122/97).